The primary structure comprises 325 residues: D-xylose 1-dehydrogenase (NADP(+)) 2 (325 aa).

An N-terminal signal peptide occupies residues 1–22; that stretch reads MMFGILGTAGIGVKSVIPAVQA.

The protein belongs to the Gfo/Idh/MocA family. As to quaternary structure, homotetramer.

It localises to the secreted. It catalyses the reaction D-xylose + NADP(+) = D-xylono-1,5-lactone + NADPH + H(+). Its function is as follows. NADP-dependent D-xylose dehydrogenase involved in the degradation of D-xylose, a major component of hemicelluloses such as xylan. Even if it shows D-xylose dehydrogenase activity, it is not essential for D-xylose degradation. In Haloferax volcanii (strain ATCC 29605 / DSM 3757 / JCM 8879 / NBRC 14742 / NCIMB 2012 / VKM B-1768 / DS2) (Halobacterium volcanii), this protein is D-xylose 1-dehydrogenase (NADP(+)) 2.